Here is a 374-residue protein sequence, read N- to C-terminus: 4-hydroxy-3-methylbut-2-en-1-yl diphosphate synthase (flavodoxin) (374 aa).

[4Fe-4S] cluster contacts are provided by Cys-268, Cys-271, Cys-303, and Glu-310.

Belongs to the IspG family. [4Fe-4S] cluster serves as cofactor.

The enzyme catalyses (2E)-4-hydroxy-3-methylbut-2-enyl diphosphate + oxidized [flavodoxin] + H2O + 2 H(+) = 2-C-methyl-D-erythritol 2,4-cyclic diphosphate + reduced [flavodoxin]. The protein operates within isoprenoid biosynthesis; isopentenyl diphosphate biosynthesis via DXP pathway; isopentenyl diphosphate from 1-deoxy-D-xylulose 5-phosphate: step 5/6. In terms of biological role, converts 2C-methyl-D-erythritol 2,4-cyclodiphosphate (ME-2,4cPP) into 1-hydroxy-2-methyl-2-(E)-butenyl 4-diphosphate. This is 4-hydroxy-3-methylbut-2-en-1-yl diphosphate synthase (flavodoxin) from Geobacillus thermodenitrificans (strain NG80-2).